The primary structure comprises 116 residues: uncharacterized protein (116 aa).

Positions 1-19 (MRWDVIILYAISRPYATRR) are cleaved as a signal peptide. The segment at 18–50 (RRTGSHTHPRDSRYIAANQRRPPSACRVGPSPA) is disordered.

This is an uncharacterized protein from Saccharomyces cerevisiae (strain ATCC 204508 / S288c) (Baker's yeast).